The primary structure comprises 806 residues: Lon protease 1 (806 aa).

In terms of domain architecture, Lon N-terminal spans 31 to 235 (VPLIAVPSHP…KVLELIYEEL (205 aa)). Position 389 to 396 (389 to 396 (GPPGVGKT)) interacts with ATP. The region spanning 626-806 (AMYSGMVMGL…NMREVIKLLF (181 aa)) is the Lon proteolytic domain. Residues serine 714 and lysine 757 contribute to the active site.

Belongs to the peptidase S16 family. Homohexamer. Organized in a ring with a central cavity.

It is found in the cytoplasm. The catalysed reaction is Hydrolysis of proteins in presence of ATP.. Its function is as follows. ATP-dependent serine protease that mediates the selective degradation of mutant and abnormal proteins as well as certain short-lived regulatory proteins. Required for cellular homeostasis and for survival from DNA damage and developmental changes induced by stress. Degrades polypeptides processively to yield small peptide fragments that are 5 to 10 amino acids long. Binds to DNA in a double-stranded, site-specific manner. This chain is Lon protease 1, found in Borreliella burgdorferi (strain ATCC 35210 / DSM 4680 / CIP 102532 / B31) (Borrelia burgdorferi).